We begin with the raw amino-acid sequence, 549 residues long: Cytoplasmic trehalase (549 aa).

Substrate is bound by residues arginine 168, 175-176, asparagine 212, 221-223, 292-294, and glycine 324; these read WD, RSQ, and RDE. Residues aspartate 326 and glutamate 509 each act as proton donor/acceptor in the active site. Glutamate 525 contributes to the substrate binding site.

Belongs to the glycosyl hydrolase 37 family. In terms of assembly, monomer.

It localises to the cytoplasm. It catalyses the reaction alpha,alpha-trehalose + H2O = alpha-D-glucose + beta-D-glucose. The protein operates within glycan degradation; trehalose degradation; D-glucose from alpha,alpha-trehalose: step 1/1. In terms of biological role, hydrolyzes trehalose to glucose. Could be involved, in cells returning to low osmolarity conditions, in the utilization of the accumulated cytoplasmic trehalose, which was synthesized in response to high osmolarity. The polypeptide is Cytoplasmic trehalase (Escherichia coli O139:H28 (strain E24377A / ETEC)).